The chain runs to 583 residues: CBP80/20-dependent translation initiation factor (583 aa).

Disordered regions lie at residues 42-95 (TDKT…PLDM), 129-154 (RQRNSPKHPPPQIDRDGFGKGKRVEG), 190-251 (RKRN…GYSQ), and 294-325 (SNTDSTERHCPPANDSEAKRKESIQSRDRPKI). Residues 43–53 (DKTEGDGESDK) are compositionally biased toward basic and acidic residues. Positions 54–63 (TQSNVSQWTV) are enriched in polar residues. 2 stretches are compositionally biased toward basic and acidic residues: residues 65-80 (CTERLEENRTSPRNRE) and 141-154 (IDRDGFGKGKRVEG). Positions 190 to 199 (RKRNDRRKQQ) are enriched in basic residues. Over residues 200-213 (KPQGGNKQPPSQQN) the composition is skewed to low complexity. Basic and acidic residues predominate over residues 298 to 324 (STERHCPPANDSEAKRKESIQSRDRPK). Residues 361–562 (IEILNSMRNN…LEVIELHANS (202 aa)) enclose the MIF4G domain.

Belongs to the CTIF family.

The protein resides in the cytoplasm. It localises to the perinuclear region. In terms of biological role, specifically required for the pioneer round of mRNA translation mediated by the cap-binding complex (CBC), that takes place during or right after mRNA export via the nuclear pore complex (NPC). In contrast, it is not involved in steady state translation, that takes place when the CBC complex is replaced by cytoplasmic cap-binding protein eIF4E. Also required for nonsense-mediated mRNA decay (NMD), the pioneer round of mRNA translation mediated by the cap-binding complex playing a central role in nonsense-mediated mRNA decay (NMD). The polypeptide is CBP80/20-dependent translation initiation factor (ctif) (Xenopus tropicalis (Western clawed frog)).